A 94-amino-acid polypeptide reads, in one-letter code: Myosuppressin (94 aa).

The first 24 residues, 1–24 (MMSPTLMILISITTMAILSGESFG), serve as a signal peptide directing secretion. Residues 25–80 (AMPAQCNSEFLEELPPRLRKICVAIARIWDAREMNDFVDDREYRENLPRYDSSVKR) constitute a propeptide that is removed on maturation. Q81 carries the pyrrolidone carboxylic acid modification. Residue F90 is modified to Phenylalanine amide.

In terms of tissue distribution, expressed throughout the nervous system (at protein level).

It is found in the secreted. Myoinhibiting neuropeptide. The sequence is that of Myosuppressin from Camponotus floridanus (Florida carpenter ant).